Reading from the N-terminus, the 175-residue chain is NADH-ubiquinone oxidoreductase chain 6 (175 aa).

The next 5 membrane-spanning stretches (helical) occupy residues 1–21 (MMTYIVFILSIIFVVSFVGFS), 25–45 (SPIYGGLVLIISGAVGCGIVL), 47–67 (FGGSFLGLMVFLIYLGGMLVV), 88–108 (AVLGAFVMGLLSELLLACYIL), and 149–169 (YGTWLVIVTGWSLLTGVLVIM).

The protein belongs to the complex I subunit 6 family. In terms of assembly, core subunit of respiratory chain NADH dehydrogenase (Complex I) which is composed of 45 different subunits.

The protein resides in the mitochondrion inner membrane. It carries out the reaction a ubiquinone + NADH + 5 H(+)(in) = a ubiquinol + NAD(+) + 4 H(+)(out). Its function is as follows. Core subunit of the mitochondrial membrane respiratory chain NADH dehydrogenase (Complex I) which catalyzes electron transfer from NADH through the respiratory chain, using ubiquinone as an electron acceptor. Essential for the catalytic activity and assembly of complex I. This Phoca vitulina (Harbor seal) protein is NADH-ubiquinone oxidoreductase chain 6 (MT-ND6).